A 248-amino-acid polypeptide reads, in one-letter code: Transcription factor MYB1 (248 aa).

HTH myb-type domains follow at residues 9 to 61 (KEGM…LNYL) and 62 to 116 (RPGI…GRRV). 2 DNA-binding regions (H-T-H motif) span residues 37-61 (WRSLPKRAGLKRCGKSCRLRWLNYL) and 89-112 (WSLIAGRLPGRTDNEIKNYWNTNL). The interval 118 to 144 (DQSHQHCRPNPTITSTKPADAPPANAN) is disordered.

Its subcellular location is the nucleus. Functionally, transcription activator involved in the spatiotemporal regulation of flavonoid biosynthesis specifically in the corms of Montbretia. Activates the promoters of enzymes involved in the biosynthesis of the flavonol kaempferol and the flavonol-glycoside kaempferol-rhamnoside. The sequence is that of Transcription factor MYB1 from Crocosmia x crocosmiiflora (Montbretia).